The following is a 763-amino-acid chain: Long-chain-fatty-acid--CoA ligase ACSBG2 (763 aa).

Residues 47–78 are disordered; sequence CSMKPADDPKTERSQMNKTGLASSSRPASNVW. Positions 51–61 are enriched in basic and acidic residues; that stretch reads PADDPKTERSQ. The span at 62–78 shows a compositional bias: polar residues; sequence MNKTGLASSSRPASNVW. ATP contacts are provided by residues 281 to 289, 472 to 477, Asp550, Arg565, and Lys678; these read TSGTTGQPK and ELYGMS.

This sequence belongs to the ATP-dependent AMP-binding enzyme family. Bubblegum subfamily.

It is found in the cytoplasm. It carries out the reaction a long-chain fatty acid + ATP + CoA = a long-chain fatty acyl-CoA + AMP + diphosphate. It catalyses the reaction (5Z,8Z,11Z,14Z)-eicosatetraenoate + ATP + CoA = (5Z,8Z,11Z,14Z)-eicosatetraenoyl-CoA + AMP + diphosphate. The enzyme catalyses hexadecanoate + ATP + CoA = hexadecanoyl-CoA + AMP + diphosphate. The catalysed reaction is (9Z)-octadecenoate + ATP + CoA = (9Z)-octadecenoyl-CoA + AMP + diphosphate. It carries out the reaction (9Z,12Z)-octadecadienoate + ATP + CoA = (9Z,12Z)-octadecadienoyl-CoA + AMP + diphosphate. It catalyses the reaction tetracosanoate + ATP + CoA = tetracosanoyl-CoA + AMP + diphosphate. In terms of biological role, mediates activation of long-chain fatty acids for both synthesis of cellular lipids, and degradation via beta-oxidation. Functionally, catalyzes the conversion of fatty acids such as long chain and very long-chain fatty acids to their active form acyl-CoAs for both synthesis of cellular lipids, and degradation via beta-oxidation. Can activate diverse saturated, monosaturated and polyunsaturated fatty acids. This chain is Long-chain-fatty-acid--CoA ligase ACSBG2, found in Gallus gallus (Chicken).